Consider the following 177-residue polypeptide: Large ribosomal subunit protein uL6 (177 aa).

The protein belongs to the universal ribosomal protein uL6 family. Part of the 50S ribosomal subunit.

Functionally, this protein binds to the 23S rRNA, and is important in its secondary structure. It is located near the subunit interface in the base of the L7/L12 stalk, and near the tRNA binding site of the peptidyltransferase center. In Methylorubrum populi (strain ATCC BAA-705 / NCIMB 13946 / BJ001) (Methylobacterium populi), this protein is Large ribosomal subunit protein uL6.